Here is a 532-residue protein sequence, read N- to C-terminus: T-complex protein 1 subunit beta (532 aa).

Belongs to the TCP-1 chaperonin family. Heterooligomeric complex of about 850 to 900 kDa that forms two stacked rings, 12 to 16 nm in diameter.

Its subcellular location is the cytoplasm. In terms of biological role, molecular chaperone; assists the folding of proteins upon ATP hydrolysis. Known to play a role, in vitro, in the folding of actin and tubulin. This is T-complex protein 1 subunit beta (cct2) from Dictyostelium discoideum (Social amoeba).